The following is an 818-amino-acid chain: Probable helicase MAGATAMA 3 (818 aa).

In terms of domain architecture, UvrD-like helicase ATP-binding spans 259–559 (NKSQKEAIDV…KMLKTQYRMH (301 aa)). 280-287 (GPPGTGKT) contacts ATP. 2 stretches are compositionally biased toward acidic residues: residues 781–790 (PDAPLYEDES) and 798–818 (GDDD…AGED). Residues 781–818 (PDAPLYEDESLPVAPYGGDDDFGDGDADQDDVAMAGED) are disordered.

It belongs to the helicase family. As to expression, expressed in flowers, siliques, leaves, roots and shoot apex.

The protein resides in the nucleus. Probable helicase that may regulate RNA molecules involved in nucleolar organization and pollen tube guidance. The chain is Probable helicase MAGATAMA 3 (MAA3) from Arabidopsis thaliana (Mouse-ear cress).